The chain runs to 115 residues: NADH-ubiquinone oxidoreductase chain 3 (115 aa).

The next 3 membrane-spanning stretches (helical) occupy residues 4-24 (IMVI…AFWL), 55-75 (FFLV…LLPI), and 86-106 (TMML…AYEW).

It belongs to the complex I subunit 3 family. As to quaternary structure, core subunit of respiratory chain NADH dehydrogenase (Complex I) which is composed of 45 different subunits. Interacts with TMEM186. Interacts with TMEM242.

The protein resides in the mitochondrion inner membrane. The catalysed reaction is a ubiquinone + NADH + 5 H(+)(in) = a ubiquinol + NAD(+) + 4 H(+)(out). Core subunit of the mitochondrial membrane respiratory chain NADH dehydrogenase (Complex I) which catalyzes electron transfer from NADH through the respiratory chain, using ubiquinone as an electron acceptor. Essential for the catalytic activity of complex I. In Baiomys taylori (Northern pygmy mouse), this protein is NADH-ubiquinone oxidoreductase chain 3.